The chain runs to 343 residues: MRN complex-interacting protein (343 aa).

The tract at residues 75–104 (EETVSASEEENVGHQQAGNVKQQEKSQPSE) is disordered. Polar residues predominate over residues 87 to 104 (GHQQAGNVKQQEKSQPSE). Residues Ser-100 and Ser-115 each carry the phosphoserine modification. Disordered regions lie at residues 128–178 (SKQP…WGPQ), 193–212 (SPCLQENSADCSAGELRGPG), and 230–324 (AQFV…AQNP). The Nuclear localization signal (NLS) signature appears at 148–151 (RKRK). Polar residues predominate over residues 193-202 (SPCLQENSAD). Positions 213 to 237 (KELWSPIQQVTATSSKWAQFVLPPR) are necessary for the association with the MRN complex. Positions 240-255 (SHVDSEQPRSLQRDPR) are enriched in basic and acidic residues.

It belongs to the MRNIP family. As to quaternary structure, associates with the MRE11-RAD50-NBN (MRN) damage-sensing complex; this association is constitutive. Interacts with MRE11. Interacts with NBN. Interacts with RAD50. Post-translationally, phosphorylated; phosphorylation is constitutive and occurs in the absence of any DNA-damaging stimulus. Phosphorylation on Ser-115 is necessary for its nuclear retention.

The protein localises to the nucleus. The protein resides in the nucleoplasm. Plays a role in the cellular response to DNA damage and the maintenance of genome stability through its association with the MRN damage-sensing complex. Promotes chromatin loading and activity of the MRN complex to facilitate subsequent ATM-mediated DNA damage response signaling and DNA repair. In Homo sapiens (Human), this protein is MRN complex-interacting protein.